Consider the following 485-residue polypeptide: Adenosylhomocysteinase (485 aa).

Residues Thr64, Asp139, and Glu205 each contribute to the substrate site. 206 to 208 (TTT) contacts NAD(+). The substrate site is built by Lys235 and Asp239. NAD(+) is bound by residues Asn240, 269 to 274 (GYGDVG), Glu292, Asn327, 348 to 350 (IGH), and Asn397.

Belongs to the adenosylhomocysteinase family. Homotetramer. The cofactor is NAD(+).

The enzyme catalyses S-adenosyl-L-homocysteine + H2O = L-homocysteine + adenosine. It functions in the pathway amino-acid biosynthesis; L-homocysteine biosynthesis; L-homocysteine from S-adenosyl-L-homocysteine: step 1/1. Its function is as follows. Adenosylhomocysteine is a competitive inhibitor of S-adenosyl-L-methionine-dependent methyl transferase reactions; therefore adenosylhomocysteinase may play a key role in the control of methylations via regulation of the intracellular concentration of adenosylhomocysteine. This Catharanthus roseus (Madagascar periwinkle) protein is Adenosylhomocysteinase (SAHH).